Here is a 499-residue protein sequence, read N- to C-terminus: Serine carboxypeptidase 1 (499 aa).

The signal sequence occupies residues 1–30; sequence MARCRRRSGCTAGAALLLLLALALSGGGGA. 3 disulfides stabilise this stretch: cysteine 92–cysteine 388, cysteine 256–cysteine 268, and cysteine 291–cysteine 355. A glycan (N-linked (GlcNAc...) asparagine) is linked at asparagine 148. The active site involves serine 188. N-linked (GlcNAc...) asparagine glycosylation occurs at asparagine 262. Positions 297–351 are cleaved as a propeptide — linker peptide; sequence IKEVNLQNSKLPQSFKDLGTTNKPFPVRTRMLGRAWPLRAPVKAGRVPSWQEVAS. Asparagine 407 is a glycosylation site (N-linked (GlcNAc...) asparagine). Catalysis depends on residues aspartate 423 and histidine 476. Residues 497 to 499 carry the Microbody targeting signal motif; the sequence is SKL.

The protein belongs to the peptidase S10 family. As to quaternary structure, carboxypeptidase I is a dimer, where each monomer is composed of two chains linked by disulfide bonds. In terms of processing, the linker peptide is endoproteolytically excised during enzyme maturation.

The protein resides in the secreted. The catalysed reaction is Release of a C-terminal amino acid with broad specificity.. Functionally, may be involved in the degradation of small peptides (2-5 residues) or in the degradation of storage proteins in the embryo. The chain is Serine carboxypeptidase 1 (CBP1) from Hordeum vulgare (Barley).